A 100-amino-acid polypeptide reads, in one-letter code: Urease subunit gamma (100 aa).

It belongs to the urease gamma subunit family. In terms of assembly, heterotrimer of UreA (gamma), UreB (beta) and UreC (alpha) subunits. Three heterotrimers associate to form the active enzyme.

It localises to the cytoplasm. The catalysed reaction is urea + 2 H2O + H(+) = hydrogencarbonate + 2 NH4(+). The protein operates within nitrogen metabolism; urea degradation; CO(2) and NH(3) from urea (urease route): step 1/1. The polypeptide is Urease subunit gamma (Prochlorococcus marinus (strain AS9601)).